The primary structure comprises 390 residues: Ribonucleoside-diphosphate reductase subunit M2 (390 aa).

Position 20 is a phosphoserine (Ser20). Position 33 is a phosphothreonine (Thr33). Residues 49–51 (RRI) carry the Cy motif. Fe cation contacts are provided by Asp139, Glu170, and His173. Tyr177 is an active-site residue. Residues Glu233, Glu267, and His270 each coordinate Fe cation.

Belongs to the ribonucleoside diphosphate reductase small chain family. Heterodimer of a large and a small subunit. Interacts (via Cy motif and when phosphorylated at Thr-33) with CCNF; the interaction occurs exclusively in G2 and early M. The cofactor is Fe cation. Post-translationally, phosphorylation on Ser-20 relieves the inhibitory effect on Wnt signaling. Phosphorylated on Thr-33 by CDK1 and CDK2; predominantly in G2 and M phase. In terms of processing, ubiquitinated by the SCF(CCNF) E3 ubiquitin-protein ligase complex; leading to its degradation by the proteasome.

It is found in the cytoplasm. The protein localises to the nucleus. The enzyme catalyses a 2'-deoxyribonucleoside 5'-diphosphate + [thioredoxin]-disulfide + H2O = a ribonucleoside 5'-diphosphate + [thioredoxin]-dithiol. Provides the precursors necessary for DNA synthesis. Catalyzes the biosynthesis of deoxyribonucleotides from the corresponding ribonucleotides. Inhibits Wnt signaling. The protein is Ribonucleoside-diphosphate reductase subunit M2 (Rrm2) of Rattus norvegicus (Rat).